The sequence spans 374 residues: MSMADQLQIPADIKPRDGRFGCGPSKVRPEQLQALSTTAAPLFGTSHRQAPVKNLVGRLRSGLAELFSLPDGYQVILGNGGATAFWDAAAFGLIDKRSLHLSYGEFSSKFAAAVAKNPFVGDPVVIKSDAGSAPEPQSDPSVDLIAWAHNETSTGVAVPVRRPADSGDALVAIDATSGAGGLPVDIGETDAYYFSPQKNFAGDGGLWLALMSPAALARVESIAASGRWVPDFLSLPIAVENSLKDQTYNTPAIGTLALMAEQVDWMLGNGGLDWAVKRTADSAGRLYSWAEERDYTTPFVADPKLRSQVVGTIDLVDDVDAAAVAKILRANGVVDTEPYRKLGRNQLRVGMFPAVDPDDVSALTQCVDWVVERL.

Arginine 48 provides a ligand contact to L-glutamate. Pyridoxal 5'-phosphate contacts are provided by residues 82-83 (AT), phenylalanine 106, threonine 152, aspartate 174, and glutamine 197. Lysine 198 is modified (N6-(pyridoxal phosphate)lysine). 249–250 (NT) contributes to the pyridoxal 5'-phosphate binding site.

Belongs to the class-V pyridoxal-phosphate-dependent aminotransferase family. SerC subfamily. As to quaternary structure, homodimer. Pyridoxal 5'-phosphate is required as a cofactor.

The protein localises to the cytoplasm. The enzyme catalyses O-phospho-L-serine + 2-oxoglutarate = 3-phosphooxypyruvate + L-glutamate. The catalysed reaction is 4-(phosphooxy)-L-threonine + 2-oxoglutarate = (R)-3-hydroxy-2-oxo-4-phosphooxybutanoate + L-glutamate. The protein operates within amino-acid biosynthesis; L-serine biosynthesis; L-serine from 3-phospho-D-glycerate: step 2/3. It participates in cofactor biosynthesis; pyridoxine 5'-phosphate biosynthesis; pyridoxine 5'-phosphate from D-erythrose 4-phosphate: step 3/5. Catalyzes the reversible conversion of 3-phosphohydroxypyruvate to phosphoserine and of 3-hydroxy-2-oxo-4-phosphonooxybutanoate to phosphohydroxythreonine. In Mycobacterium avium (strain 104), this protein is Putative phosphoserine aminotransferase.